The following is an 85-amino-acid chain: MNSLLMITACLVLFGTVWAKEGYLVNTYTGCKYICWKLGENKYCIDECKEIGAGYGYCYGFGCYCEGFPENKPTWPLPNKTCGRK.

Positions 1-19 (MNSLLMITACLVLFGTVWA) are cleaved as a signal peptide. Residues 20–83 (KEGYLVNTYT…TWPLPNKTCG (64 aa)) enclose the LCN-type CS-alpha/beta domain. 4 cysteine pairs are disulfide-bonded: cysteine 31/cysteine 82, cysteine 35/cysteine 58, cysteine 44/cysteine 63, and cysteine 48/cysteine 65.

This sequence belongs to the long (4 C-C) scorpion toxin superfamily. Sodium channel inhibitor family. Beta subfamily. Expressed by the venom gland.

Its subcellular location is the secreted. Its function is as follows. Beta toxins bind voltage-independently at site-4 of sodium channels (Nav) and shift the voltage of activation toward more negative potentials thereby affecting sodium channel activation and promoting spontaneous and repetitive firing. The polypeptide is Toxin Cll7 (Centruroides limpidus (Mexican scorpion)).